A 465-amino-acid chain; its full sequence is Uronate isomerase (465 aa).

This sequence belongs to the metallo-dependent hydrolases superfamily. Uronate isomerase family.

It catalyses the reaction D-glucuronate = D-fructuronate. The catalysed reaction is aldehydo-D-galacturonate = keto-D-tagaturonate. It participates in carbohydrate metabolism; pentose and glucuronate interconversion. This is Uronate isomerase from Streptococcus equi subsp. equi (strain 4047).